We begin with the raw amino-acid sequence, 165 residues long: Peptide methionine sulfoxide reductase MsrA (165 aa).

Residue Cys-10 is part of the active site.

Belongs to the MsrA Met sulfoxide reductase family.

It carries out the reaction L-methionyl-[protein] + [thioredoxin]-disulfide + H2O = L-methionyl-(S)-S-oxide-[protein] + [thioredoxin]-dithiol. The enzyme catalyses [thioredoxin]-disulfide + L-methionine + H2O = L-methionine (S)-S-oxide + [thioredoxin]-dithiol. Its function is as follows. Has an important function as a repair enzyme for proteins that have been inactivated by oxidation. Catalyzes the reversible oxidation-reduction of methionine sulfoxide in proteins to methionine. The chain is Peptide methionine sulfoxide reductase MsrA from Campylobacter jejuni subsp. jejuni serotype O:23/36 (strain 81-176).